A 158-amino-acid polypeptide reads, in one-letter code: C-type lectin lectoxin-Enh5 (158 aa).

Positions 1–23 (MGQFTVVSLGLLAVFLSLSGAKG) are cleaved as a signal peptide. Disulfide bonds link C26–C37, C54–C154, and C129–C146. Residues 33–155 (RNGVCNKLFP…CASLHPFICQ (123 aa)) form the C-type lectin domain. The Mannose-binding motif lies at 119–121 (EPN). Positions 127, 142, and 143 each coordinate Ca(2+).

The protein belongs to the true venom lectin family. Expressed by the venom gland.

The protein localises to the secreted. Its function is as follows. Mannose-binding lectin which recognizes specific carbohydrate structures and agglutinates a variety of animal cells by binding to cell-surface glycoproteins and glycolipids. May be a calcium-dependent lectin. In Pseudoferania polylepis (Macleay's water snake), this protein is C-type lectin lectoxin-Enh5.